The sequence spans 103 residues: Integration host factor subunit alpha (103 aa).

The disordered stretch occupies residues 50 to 72; sequence GNFNLRDKGERPGRNPKTGEEIP. Positions 54–69 are enriched in basic and acidic residues; sequence LRDKGERPGRNPKTGE.

Belongs to the bacterial histone-like protein family. As to quaternary structure, heterodimer of an alpha and a beta chain.

This protein is one of the two subunits of integration host factor, a specific DNA-binding protein that functions in genetic recombination as well as in transcriptional and translational control. The protein is Integration host factor subunit alpha of Coxiella burnetii (strain CbuK_Q154) (Coxiella burnetii (strain Q154)).